The following is a 1216-amino-acid chain: Phospholipase D B (1216 aa).

Positions 1-14 (MNLSQEHAINQNLH) are enriched in polar residues. Residues 1-48 (MNLSQEHAINQNLHKNQKNEEKIEKKTINKDGRGQMNYDGEEGQGEKS) are disordered. Basic and acidic residues predominate over residues 17-33 (QKNEEKIEKKTINKDGR). 2 consecutive EF-hand domains span residues 196–231 (RNADLTISLMNAIDRNGDQKIAFPEFVQALSIMCRG) and 232–267 (TKKERLRFTFEICDFNGDSLVSRDEVYSTVKAISDI). Ca(2+) contacts are provided by Asp-209, Asn-211, Asp-213, Lys-215, and Glu-220. One can recognise a PH domain in the interval 347-462 (EINMNGQLTK…WVNAIRFHSR (116 aa)). The PLD phosphodiesterase 1 domain occupies 585-612 (LSWSHHQKNAIIDQQIAFVGGIDICLMR). Residues His-590, Lys-592, and Asp-597 contribute to the active site. A disordered region spans residues 732–844 (VSYGREKPTH…GLKSKNYKNN (113 aa)). A compositionally biased stretch (low complexity) spans 776 to 789 (NNSTNSENSENSYS). The segment covering 790 to 813 (EFDEEDEEGNQEEEDEDEFDEFEK) has biased composition (acidic residues). Positions 1036 to 1063 (EQIYVHSKVLIVDDRVAVIGSCNINDRS) constitute a PLD phosphodiesterase 2 domain. Catalysis depends on residues His-1041, Lys-1043, and Asp-1048.

It belongs to the phospholipase D family.

It localises to the cytoplasmic vesicle. It is found in the cytoplasm. The protein localises to the cell cortex. The enzyme catalyses a 1,2-diacyl-sn-glycero-3-phosphocholine + H2O = a 1,2-diacyl-sn-glycero-3-phosphate + choline + H(+). Its activity is regulated as follows. Inhibited by butan-1-ol. In terms of biological role, plays a role in cell growth. Hydrolyzes membrane phospholipids, such as PtdCho (phosphatidylcholine), producing the free headgroup and PtdOH (phosphatidic acid; signaling molecule on its own). Involved in the inhibition of actin-based motility and endocytosis. Its inhibition causes complete collapse of F-actin organization. Plays an important role in cell migration by localizing along the anterior cell membrane. Overexpression leads to the inability to aggregate even at higher cell density. Also known as a negative regulator of quorum sensing. The chain is Phospholipase D B (pldB) from Dictyostelium discoideum (Social amoeba).